Consider the following 155-residue polypeptide: MKLQLVAVGTKMPDWVQTGFTEYLRRFPKDMPFELVEIPAGKRGKNADIKRILDKEGELMLAAAGKNRIVTLDIPGKPWDTPQLAQELERWKLDGRDVSLLIGGPEGLSSACKAAAEQSWSLSALTLPHPLVRVLVAESLYRAWSITTNHPYHRE.

Residues Leu72, Gly103, and 122-127 (LSALTL) contribute to the S-adenosyl-L-methionine site.

Belongs to the RNA methyltransferase RlmH family. As to quaternary structure, homodimer.

Its subcellular location is the cytoplasm. It carries out the reaction pseudouridine(1915) in 23S rRNA + S-adenosyl-L-methionine = N(3)-methylpseudouridine(1915) in 23S rRNA + S-adenosyl-L-homocysteine + H(+). Its function is as follows. Specifically methylates the pseudouridine at position 1915 (m3Psi1915) in 23S rRNA. The protein is Ribosomal RNA large subunit methyltransferase H of Enterobacter sp. (strain 638).